The primary structure comprises 308 residues: Ribosomal RNA small subunit methyltransferase H (308 aa).

Residues 32 to 34 (GGH), aspartate 51, phenylalanine 78, aspartate 99, and glutamine 106 contribute to the S-adenosyl-L-methionine site.

This sequence belongs to the methyltransferase superfamily. RsmH family.

It localises to the cytoplasm. The catalysed reaction is cytidine(1402) in 16S rRNA + S-adenosyl-L-methionine = N(4)-methylcytidine(1402) in 16S rRNA + S-adenosyl-L-homocysteine + H(+). Specifically methylates the N4 position of cytidine in position 1402 (C1402) of 16S rRNA. In Campylobacter curvus (strain 525.92), this protein is Ribosomal RNA small subunit methyltransferase H.